We begin with the raw amino-acid sequence, 145 residues long: Deoxyuridine 5'-triphosphate nucleotidohydrolase (145 aa).

Residues 62-64 (RSG), Asn75, 79-81 (TVD), and Lys89 contribute to the substrate site.

The protein belongs to the dUTPase family. It depends on Mg(2+) as a cofactor.

It catalyses the reaction dUTP + H2O = dUMP + diphosphate + H(+). The protein operates within pyrimidine metabolism; dUMP biosynthesis; dUMP from dCTP (dUTP route): step 2/2. This enzyme is involved in nucleotide metabolism: it produces dUMP, the immediate precursor of thymidine nucleotides and it decreases the intracellular concentration of dUTP so that uracil cannot be incorporated into DNA. The chain is Deoxyuridine 5'-triphosphate nucleotidohydrolase from Helicobacter pylori (strain J99 / ATCC 700824) (Campylobacter pylori J99).